A 225-amino-acid chain; its full sequence is Cytidylate kinase (225 aa).

12–20 (GPSGAGKGT) provides a ligand contact to ATP.

Belongs to the cytidylate kinase family. Type 1 subfamily.

Its subcellular location is the cytoplasm. It carries out the reaction CMP + ATP = CDP + ADP. It catalyses the reaction dCMP + ATP = dCDP + ADP. The chain is Cytidylate kinase from Stenotrophomonas maltophilia (strain K279a).